The chain runs to 75 residues: Dermaseptin-SP4 (75 aa).

An N-terminal signal peptide occupies residues 1 to 22 (MAFLKKSLFLVLFLGLVSLSMC). Residues 23 to 45 (EEEKRENEVEEEQEDDEQSELRR) constitute a propeptide that is removed on maturation. Pro-72 carries the post-translational modification Proline amide. Positions 74 to 75 (EQ) are excised as a propeptide.

This sequence belongs to the frog skin active peptide (FSAP) family. Dermaseptin subfamily. As to expression, expressed by the skin glands.

Its subcellular location is the secreted. The protein resides in the target cell membrane. Antimicrobial peptide with activity against Gram-positive and Gram-negative bacteria and fungi. Has been tested against E.coli (MIC=47.25-128 uM), S.aureus (MIC=189-512 uM), K.pneumoniae (MIC=189 uM) and C.albicans (MIC&gt;189 uM). Probably acts by disturbing membrane functions with its alpha-helical amphipathic structure. May penetrate bacterial membranes, but stay at the mammalian membrane surface. Shows a weak hemolytic activity. This chain is Dermaseptin-SP4, found in Agalychnis spurrelli (Gliding leaf frog).